Reading from the N-terminus, the 338-residue chain is D-xylulose reductase (338 aa).

Residues Cys40, His65, and Glu151 each coordinate Zn(2+).

The protein belongs to the zinc-containing alcohol dehydrogenase family. Homotetramer. It depends on Zn(2+) as a cofactor.

The catalysed reaction is xylitol + NAD(+) = D-xylulose + NADH + H(+). The sequence is that of D-xylulose reductase from Morganella morganii (Proteus morganii).